A 138-amino-acid polypeptide reads, in one-letter code: Large ribosomal subunit protein bL17 (138 aa).

This sequence belongs to the bacterial ribosomal protein bL17 family. Part of the 50S ribosomal subunit. Contacts protein L32.

This chain is Large ribosomal subunit protein bL17, found in Dinoroseobacter shibae (strain DSM 16493 / NCIMB 14021 / DFL 12).